A 60-amino-acid chain; its full sequence is Large ribosomal subunit protein bL32 (60 aa).

This sequence belongs to the bacterial ribosomal protein bL32 family.

This is Large ribosomal subunit protein bL32 from Synechococcus sp. (strain JA-3-3Ab) (Cyanobacteria bacterium Yellowstone A-Prime).